Here is a 450-residue protein sequence, read N- to C-terminus: Phosphoglucosamine mutase (450 aa).

The active-site Phosphoserine intermediate is the serine 101. Mg(2+) is bound by residues serine 101, aspartate 240, aspartate 242, and aspartate 244. Serine 101 is subject to Phosphoserine.

Belongs to the phosphohexose mutase family. Mg(2+) serves as cofactor. In terms of processing, activated by phosphorylation.

The enzyme catalyses alpha-D-glucosamine 1-phosphate = D-glucosamine 6-phosphate. Functionally, catalyzes the conversion of glucosamine-6-phosphate to glucosamine-1-phosphate. This is Phosphoglucosamine mutase from Streptococcus pneumoniae serotype 4 (strain ATCC BAA-334 / TIGR4).